Reading from the N-terminus, the 2167-residue chain is Glutamate synthase 1 [NADH], chloroplastic (2167 aa).

The segment at 1–31 is disordered; that stretch reads MSAAQGMAYKLRTDAAPTGAGRRARRSHSSV. The N-terminal 36 residues, 1–36, are a transit peptide targeting the chloroplast; that stretch reads MSAAQGMAYKLRTDAAPTGAGRRARRSHSSVAAPYR. Cys-100 serves as the catalytic Nucleophile. Positions 100–504 constitute a Glutamine amidotransferase type-2 domain; that stretch reads CGVGFVAELS…PGMMLLVDFE (405 aa). Positions 1022–1042 are disordered; it reads KSNTGEGGEQPSRMEPLANGS. 1192–1249 provides a ligand contact to FMN; it reads LAETHQTLVANGLRGRAILQTDGQLKTGKDVAVACLLGAEEFGFSTAPLITLGCIMMR. Positions 1245, 1251, and 1256 each coordinate [3Fe-4S] cluster. Position 1956-1970 (1956-1970) interacts with NAD(+); that stretch reads GGGDTGTDCIGTSIR.

It belongs to the glutamate synthase family. Monomer. It depends on [3Fe-4S] cluster as a cofactor. Requires FAD as cofactor. FMN is required as a cofactor. Highly expressed in roots.

The protein resides in the plastid. It is found in the chloroplast. It catalyses the reaction 2 L-glutamate + NAD(+) = L-glutamine + 2-oxoglutarate + NADH + H(+). The protein operates within amino-acid biosynthesis; L-glutamate biosynthesis via GLT pathway; L-glutamate from 2-oxoglutarate and L-glutamine (NAD(+) route): step 1/1. It participates in energy metabolism; nitrogen metabolism. Involved in glutamate biosynthesis and plays a major role in the primary ammonium ions assimilation in seedling roots. May be involved in the reutilization of glutamine in developing organs. Plays a role in the development of tillers. The sequence is that of Glutamate synthase 1 [NADH], chloroplastic from Oryza sativa subsp. japonica (Rice).